The chain runs to 100 residues: Small ribosomal subunit protein uS17 (100 aa).

It belongs to the universal ribosomal protein uS17 family. Part of the 30S ribosomal subunit.

One of the primary rRNA binding proteins, it binds specifically to the 5'-end of 16S ribosomal RNA. The polypeptide is Small ribosomal subunit protein uS17 (Erythrobacter litoralis (strain HTCC2594)).